Here is a 315-residue protein sequence, read N- to C-terminus: UDP-N-acetylenolpyruvoylglucosamine reductase (315 aa).

The FAD-binding PCMH-type domain maps to 27 to 207 (RVGGPADVLY…TKRMNAITAR (181 aa)). The active site involves arginine 172. Residues 214-236 (IREKTSGSTFANPDPPGTPNQRK) are disordered. The Proton donor role is filled by serine 221. Residue glutamate 297 is part of the active site.

Belongs to the MurB family. It depends on FAD as a cofactor.

Its subcellular location is the cytoplasm. It carries out the reaction UDP-N-acetyl-alpha-D-muramate + NADP(+) = UDP-N-acetyl-3-O-(1-carboxyvinyl)-alpha-D-glucosamine + NADPH + H(+). It participates in cell wall biogenesis; peptidoglycan biosynthesis. Its function is as follows. Cell wall formation. This Maricaulis maris (strain MCS10) (Caulobacter maris) protein is UDP-N-acetylenolpyruvoylglucosamine reductase.